Here is a 683-residue protein sequence, read N- to C-terminus: UvrABC system protein B (683 aa).

The disordered stretch occupies residues 1 to 29; the sequence is MTDTGPLQPDRPDLDRPLSVDAPFEPAGD. The 379-residue stretch at 39–417 folds into the Helicase ATP-binding domain; it reads AGFESGAEKQ…PGDYERDHSE (379 aa). Position 52-59 (52-59) interacts with ATP; the sequence is GVTGSGKT. The short motif at 105 to 128 is the Beta-hairpin element; that stretch reads YYDYYQPEAYVEQTDTYIDKDMSI. The Helicase C-terminal domain occupies 442–604; it reads QVEDLIERIQ…EPRTIEKPVS (163 aa). Basic and acidic residues predominate over residues 587-603; the sequence is EFNAEHGHEPRTIEKPV. The interval 587–620 is disordered; the sequence is EFNAEHGHEPRTIEKPVSETNLPGSSTDTDGVAD. Positions 604–615 are enriched in polar residues; sequence SETNLPGSSTDT. The UVR domain maps to 630–665; that stretch reads EQLIERLETRMQEAADNLEFELAADIRDRIRELRET.

Belongs to the UvrB family. Forms a heterotetramer with UvrA during the search for lesions. Interacts with UvrC in an incision complex.

The protein resides in the cytoplasm. The UvrABC repair system catalyzes the recognition and processing of DNA lesions. A damage recognition complex composed of 2 UvrA and 2 UvrB subunits scans DNA for abnormalities. Upon binding of the UvrA(2)B(2) complex to a putative damaged site, the DNA wraps around one UvrB monomer. DNA wrap is dependent on ATP binding by UvrB and probably causes local melting of the DNA helix, facilitating insertion of UvrB beta-hairpin between the DNA strands. Then UvrB probes one DNA strand for the presence of a lesion. If a lesion is found the UvrA subunits dissociate and the UvrB-DNA preincision complex is formed. This complex is subsequently bound by UvrC and the second UvrB is released. If no lesion is found, the DNA wraps around the other UvrB subunit that will check the other stand for damage. The chain is UvrABC system protein B from Natronomonas pharaonis (strain ATCC 35678 / DSM 2160 / CIP 103997 / JCM 8858 / NBRC 14720 / NCIMB 2260 / Gabara) (Halobacterium pharaonis).